We begin with the raw amino-acid sequence, 489 residues long: Occludin (489 aa).

Topologically, residues 1–51 are cytoplasmic; sequence MMYEKRSYTGYGHPSSHYDYPPPSGPPGSFYLADVPPQHFYQWRSPPGIVR. Residues 45-248 form the MARVEL domain; the sequence is SPPGIVRILQ…ICYFAQKTRH (204 aa). The helical transmembrane segment at 52-74 threads the bilayer; sequence ILQGSVVILCLVIFACVASTLAW. Residues 75–112 are Extracellular-facing; it reads EYYGSGGLLGYGGGLGSYYNGYYGGYNGYYYGGLTNPR. A helical transmembrane segment spans residues 113–137; that stretch reads AANGFMIAMAVLCFLVTLGLVIAGL. Over 138-147 the chain is Cytoplasmic; the sequence is SKASGARSRR. A helical membrane pass occupies residues 148-172; it reads FYLLVAVLSGLLAFVMLIASIVYVV. The Extracellular segment spans residues 173–222; the sequence is GVNPRAGLGASSGSLYYNQMLMLCNQMMSPVAGGIMNQYLYHYCMVDPQE. C196 and C216 are joined by a disulfide. A helical membrane pass occupies residues 223–244; the sequence is AVAIVCGFLTVILLCVICYFAQ. The Cytoplasmic portion of the chain corresponds to 245-489; sequence KTRHKIWKYG…MVGGYDQSRS (245 aa). S280 is modified (phosphoserine). T285 is subject to Phosphothreonine. At S300 the chain carries Phosphoserine. The disordered stretch occupies residues 308–382; the sequence is PAQENGYGHS…ESSGEQNRDD (75 aa). Pro residues predominate over residues 322–332; it reads PSVPPPEGPSP. A compositionally biased stretch (basic residues) spans 345-354; the sequence is PARRGHRQRP. 2 positions are modified to phosphotyrosine: Y364 and Y368. The span at 365-377 shows a compositional bias: polar residues; the sequence is ETDYTTAAESSGE. 2 positions are modified to phosphothreonine; by PKC/PRKCH: T369 and T370. A Phosphoserine modification is found at S374. In terms of domain architecture, OCEL spans 381 to 489; it reads DDWASLYPPI…MVGGYDQSRS (109 aa). The stretch at 407–434 forms a coiled coil; it reads LQRYKALCAEMDDIGTQLRQLSHELDCL. S457 is subject to Phosphoserine.

It belongs to the ELL/occludin family. In terms of assembly, interacts with TJP1/ZO1. Interacts with VAPA. Interacts with CLDN1, CLDN6, CLDN9, CLDN11, CLDN12 and CLDN17. Interacts with PLSCR1. Interacts with LSR, ILDR1 and ILDR2. Interacts with TJP2/ZO2. Dephosphorylated by PTPRJ. As to expression, localized at tight junctions of both epithelial and endothelial cells.

The protein resides in the cell membrane. It is found in the cell junction. The protein localises to the tight junction. May play a role in the formation and regulation of the tight junction (TJ) paracellular permeability barrier. The polypeptide is Occludin (OCLN) (Potorous tridactylus (Potoroo)).